We begin with the raw amino-acid sequence, 276 residues long: Exosome complex component RRP43 (276 aa).

Ala-2 bears the N-acetylalanine mark.

Belongs to the RNase PH family. Component of the RNA exosome core complex (Exo-9), composed of EXOSC1, EXOSC2, EXOSC3, EXOSC4, EXOSC5, EXOSC6, EXOSC7, EXOSC8 and EXOSC9; within the complex interacts with EXOSC5 and EXOSC6. The catalytically inactive RNA exosome core complex (Exo-9) associates with the catalytic subunit EXOSC10/RRP6. Exo-9 may associate with DIS3 to form the nucleolar exosome complex, or DIS3L to form the cytoplasmic exosome complex. Exo-9 is formed by a hexameric base ring consisting of the heterodimers EXOSC4-EXOSC9, EXOSC5-EXOSC8 and EXOSC6-EXOSC7, and a cap ring consisting of EXOSC1, EXOSC2 and EXOSC3. The RNA exosome complex associates with cofactors C1D/RRP47, MPHOSPH6/MPP6 and MTREX/MTR4.

It localises to the cytoplasm. Its subcellular location is the nucleus. The protein localises to the nucleolus. In terms of biological role, non-catalytic component of the RNA exosome complex which has 3'-&gt;5' exoribonuclease activity and participates in a multitude of cellular RNA processing and degradation events. In the nucleus, the RNA exosome complex is involved in proper maturation of stable RNA species such as rRNA, snRNA and snoRNA, in the elimination of RNA processing by-products and non-coding 'pervasive' transcripts, such as antisense RNA species and promoter-upstream transcripts (PROMPTs), and of mRNAs with processing defects, thereby limiting or excluding their export to the cytoplasm. The RNA exosome may be involved in Ig class switch recombination (CSR) and/or Ig variable region somatic hypermutation (SHM) by targeting AICDA deamination activity to transcribed dsDNA substrates. In the cytoplasm, the RNA exosome complex is involved in general mRNA turnover and specifically degrades inherently unstable mRNAs containing AU-rich elements (AREs) within their 3' untranslated regions, and in RNA surveillance pathways, preventing translation of aberrant mRNAs. It seems to be involved in degradation of histone mRNA. The catalytic inactive RNA exosome core complex of 9 subunits (Exo-9) is proposed to play a pivotal role in the binding and presentation of RNA for ribonucleolysis, and to serve as a scaffold for the association with catalytic subunits and accessory proteins or complexes. EXOSC8 binds to ARE-containing RNAs. In Mus musculus (Mouse), this protein is Exosome complex component RRP43 (Exosc8).